The chain runs to 127 residues: Aspartate 1-decarboxylase (127 aa).

Residue Ser-25 is the Schiff-base intermediate with substrate; via pyruvic acid of the active site. Ser-25 is subject to Pyruvic acid (Ser). Thr-57 is a binding site for substrate. Tyr-58 serves as the catalytic Proton donor. 73 to 75 is a binding site for substrate; the sequence is GAA.

The protein belongs to the PanD family. As to quaternary structure, heterooctamer of four alpha and four beta subunits. Pyruvate is required as a cofactor. Post-translationally, is synthesized initially as an inactive proenzyme, which is activated by self-cleavage at a specific serine bond to produce a beta-subunit with a hydroxyl group at its C-terminus and an alpha-subunit with a pyruvoyl group at its N-terminus.

Its subcellular location is the cytoplasm. The catalysed reaction is L-aspartate + H(+) = beta-alanine + CO2. Its pathway is cofactor biosynthesis; (R)-pantothenate biosynthesis; beta-alanine from L-aspartate: step 1/1. Catalyzes the pyruvoyl-dependent decarboxylation of aspartate to produce beta-alanine. In Bacillus cytotoxicus (strain DSM 22905 / CIP 110041 / 391-98 / NVH 391-98), this protein is Aspartate 1-decarboxylase.